The sequence spans 432 residues: Glutamate-1-semialdehyde 2,1-aminomutase 2 (432 aa).

Position 268 is an N6-(pyridoxal phosphate)lysine (lysine 268).

Belongs to the class-III pyridoxal-phosphate-dependent aminotransferase family. HemL subfamily. As to quaternary structure, homodimer. Requires pyridoxal 5'-phosphate as cofactor.

The protein resides in the cytoplasm. The enzyme catalyses (S)-4-amino-5-oxopentanoate = 5-aminolevulinate. The protein operates within porphyrin-containing compound metabolism; protoporphyrin-IX biosynthesis; 5-aminolevulinate from L-glutamyl-tRNA(Glu): step 2/2. This Listeria welshimeri serovar 6b (strain ATCC 35897 / DSM 20650 / CCUG 15529 / CIP 8149 / NCTC 11857 / SLCC 5334 / V8) protein is Glutamate-1-semialdehyde 2,1-aminomutase 2.